Reading from the N-terminus, the 90-residue chain is DNA-binding protein HU-beta (90 aa).

This sequence belongs to the bacterial histone-like protein family. Heterodimer of an alpha and a beta chain.

In terms of biological role, histone-like DNA-binding protein which is capable of wrapping DNA to stabilize it, and thus to prevent its denaturation under extreme environmental conditions. In Salmonella typhi, this protein is DNA-binding protein HU-beta (hupB).